The chain runs to 119 residues: NADH dehydrogenase [ubiquinone] 1 subunit C2 (119 aa).

Residues 56–75 traverse the membrane as a helical segment; it reads GLHRQLLYITAFFFAGYYLV.

It belongs to the complex I NDUFC2 subunit family. Complex I is composed of 45 different subunits. Interacts with TMEM242.

It localises to the mitochondrion inner membrane. Functionally, accessory subunit of the mitochondrial membrane respiratory chain NADH dehydrogenase (Complex I), that is believed not to be involved in catalysis but required for the complex assembly. Complex I functions in the transfer of electrons from NADH to the respiratory chain. The immediate electron acceptor for the enzyme is believed to be ubiquinone. In Gorilla gorilla gorilla (Western lowland gorilla), this protein is NADH dehydrogenase [ubiquinone] 1 subunit C2.